The following is a 513-amino-acid chain: ATP synthase subunit alpha (513 aa).

Residue 169-176 (GDRQTGKT) participates in ATP binding.

Belongs to the ATPase alpha/beta chains family. As to quaternary structure, F-type ATPases have 2 components, CF(1) - the catalytic core - and CF(0) - the membrane proton channel. CF(1) has five subunits: alpha(3), beta(3), gamma(1), delta(1), epsilon(1). CF(0) has three main subunits: a(1), b(2) and c(9-12). The alpha and beta chains form an alternating ring which encloses part of the gamma chain. CF(1) is attached to CF(0) by a central stalk formed by the gamma and epsilon chains, while a peripheral stalk is formed by the delta and b chains.

It is found in the cell inner membrane. It carries out the reaction ATP + H2O + 4 H(+)(in) = ADP + phosphate + 5 H(+)(out). In terms of biological role, produces ATP from ADP in the presence of a proton gradient across the membrane. The alpha chain is a regulatory subunit. The sequence is that of ATP synthase subunit alpha from Actinobacillus pleuropneumoniae serotype 7 (strain AP76).